Here is a 259-residue protein sequence, read N- to C-terminus: Deoxyribose-phosphate aldolase (259 aa).

D102 serves as the catalytic Proton donor/acceptor. K167 (schiff-base intermediate with acetaldehyde) is an active-site residue. The active-site Proton donor/acceptor is K201.

Belongs to the DeoC/FbaB aldolase family. DeoC type 2 subfamily.

The protein resides in the cytoplasm. It catalyses the reaction 2-deoxy-D-ribose 5-phosphate = D-glyceraldehyde 3-phosphate + acetaldehyde. Its pathway is carbohydrate degradation; 2-deoxy-D-ribose 1-phosphate degradation; D-glyceraldehyde 3-phosphate and acetaldehyde from 2-deoxy-alpha-D-ribose 1-phosphate: step 2/2. In terms of biological role, catalyzes a reversible aldol reaction between acetaldehyde and D-glyceraldehyde 3-phosphate to generate 2-deoxy-D-ribose 5-phosphate. This chain is Deoxyribose-phosphate aldolase, found in Serratia proteamaculans (strain 568).